The following is a 79-amino-acid chain: Protein FAM236C (79 aa).

The tract at residues 19 to 48 (KGPQKDPEELVAVSDTAEDPSSGTGLPREP) is disordered.

This sequence belongs to the FAM236 family.

The protein is Protein FAM236C of Homo sapiens (Human).